Consider the following 261-residue polypeptide: Small ribosomal subunit protein eS1 (261 aa).

Residues 1–18 (MAVGKNKRISKGKKGGKK) are compositionally biased toward basic residues. The interval 1–23 (MAVGKNKRISKGKKGGKKKAADP) is disordered.

Belongs to the eukaryotic ribosomal protein eS1 family. In terms of assembly, component of the small ribosomal subunit. Mature ribosomes consist of a small (40S) and a large (60S) subunit. The 40S subunit contains about 33 different proteins and 1 molecule of RNA (18S). The 60S subunit contains about 49 different proteins and 3 molecules of RNA (25S, 5.8S and 5S).

It localises to the cytoplasm. The polypeptide is Small ribosomal subunit protein eS1 (cyc07) (Nicotiana tabacum (Common tobacco)).